The chain runs to 57 residues: Somatostatin-2 (57 aa).

The disordered stretch occupies residues 1–26 (GRSHMVLNSALEGARGGPGGEEIPER).

Belongs to the somatostatin family.

It is found in the secreted. Functionally, somatostatin inhibits the release of somatotropin. The chain is Somatostatin-2 (sst2) from Piaractus mesopotamicus (Small-scaled pacu).